Reading from the N-terminus, the 80-residue chain is MARKKASIDFEQSLADLQALVERLENGELSLEESLAAFEQGIALTRDCQGALAQAEQKVQILLERDGELAAQPFDAEPEA.

The protein belongs to the XseB family. In terms of assembly, heterooligomer composed of large and small subunits.

The protein resides in the cytoplasm. The catalysed reaction is Exonucleolytic cleavage in either 5'- to 3'- or 3'- to 5'-direction to yield nucleoside 5'-phosphates.. In terms of biological role, bidirectionally degrades single-stranded DNA into large acid-insoluble oligonucleotides, which are then degraded further into small acid-soluble oligonucleotides. This is Exodeoxyribonuclease 7 small subunit from Pseudomonas entomophila (strain L48).